Reading from the N-terminus, the 422-residue chain is Phytoene synthase 1, chloroplastic (422 aa).

The transit peptide at 1 to 70 directs the protein to the chloroplast; sequence MSSSVAVLWV…NRSRRIGVVS (70 aa).

It belongs to the phytoene/squalene synthase family. As to quaternary structure, monomer. Interacts with OR. Interacts with ORLIKE.

The protein localises to the plastid. It is found in the chloroplast membrane. The catalysed reaction is 2 (2E,6E,10E)-geranylgeranyl diphosphate = 15-cis-phytoene + 2 diphosphate. It functions in the pathway carotenoid biosynthesis; phytoene biosynthesis; all-trans-phytoene from geranylgeranyl diphosphate: step 1/1. Its function is as follows. Catalyzes the reaction from prephytoene diphosphate to phytoene. In Arabidopsis thaliana (Mouse-ear cress), this protein is Phytoene synthase 1, chloroplastic.